Reading from the N-terminus, the 434-residue chain is MQVSVETTQGLGRRVTITVAADIIESAVKSELVNAAKKVRIDGFRKGKVPMNVVAQRYGASVRQDVLGDLMQRNFVDAIIKEKINPVGAPNYTPGEYAVGGDFTYTVEFDVYPEVELKGLEAIEVEKPVVEVTDADVDTMLDTLRKQQATWKETDRAATAEDRATIDFTGSIDGEVFEGGKASDFVLAMGQSRMIPGFEDGIVGHKAGEEFTINVNFPEDYHAENLKGKAAQFVIVLKKVEERELPELTEEFIKRFGVADGSQEGLRAEVRKNMERELKGAVRNRVKTQVLDGLINANDIEVPVALIDGEIDVLRRQAAQRFGGNEKQALELPRELFEEQAKRRVVIGLLLGEVISSNELKADEARVNVLIEEMASAYEDPQEVIEFYSKNKELLNNMRNVALEEQAVETVLAKAKVVEKSVSFNELMNQTTTA.

In terms of domain architecture, PPIase FKBP-type spans 161 to 246; it reads EDRATIDFTG…LKKVEERELP (86 aa).

Belongs to the FKBP-type PPIase family. Tig subfamily.

The protein resides in the cytoplasm. It catalyses the reaction [protein]-peptidylproline (omega=180) = [protein]-peptidylproline (omega=0). In terms of biological role, involved in protein export. Acts as a chaperone by maintaining the newly synthesized protein in an open conformation. Functions as a peptidyl-prolyl cis-trans isomerase. The sequence is that of Trigger factor from Pectobacterium atrosepticum (strain SCRI 1043 / ATCC BAA-672) (Erwinia carotovora subsp. atroseptica).